A 73-amino-acid chain; its full sequence is Omega-hexatoxin-Ar1b (73 aa).

An N-terminal signal peptide occupies residues 1–22; that stretch reads MNTATGFIVLLVLATVLGCIEA. Residues 23-37 constitute a propeptide that is removed on maturation; the sequence is GESHVREDAMGRARR. 3 disulfides stabilise this stretch: Cys-40–Cys-54, Cys-47–Cys-58, and Cys-53–Cys-72.

This sequence belongs to the neurotoxin 08 (Shiva) family. 01 (omega toxin) subfamily. Expressed by the venom gland.

The protein resides in the secreted. Insecticidal toxin that reversibly and voltage-independently blocks both mid-low- (M-LVA) and high-voltage-activated (HVA) calcium channels (Cav) in cockroach DUM neurons. Also causes a modest block of insect sodium channel currents (Nav). Induces potent excitatory symptoms, followed by flaccid paralysis leading to death in house crickets. This Atrax robustus (Sydney funnel-web spider) protein is Omega-hexatoxin-Ar1b.